Consider the following 1101-residue polypeptide: Selenocysteine insertion sequence-binding protein 2-like (1101 aa).

Disordered stretches follow at residues leucine 154–aspartate 206, leucine 240–glycine 295, glutamine 320–leucine 387, threonine 884–glutamate 1010, and threonine 1030–threonine 1101. Low complexity predominate over residues alanine 255–glutamate 265. Serine 276 is modified (phosphoserine). Positions lysine 327–valine 346 are enriched in polar residues. Composition is skewed to basic and acidic residues over residues serine 356–histidine 371 and glutamate 892–serine 908. The segment covering alanine 925–threonine 939 has biased composition (low complexity). Basic and acidic residues predominate over residues alanine 940–aspartate 950. Positions alanine 954 to leucine 964 are enriched in polar residues. Acidic residues predominate over residues leucine 988 to tyrosine 1002. Residues threonine 1030–glycine 1039 are compositionally biased toward polar residues. Residues serine 1040–glutamate 1057 are compositionally biased toward acidic residues. Residues alanine 1070 to leucine 1087 show a composition bias toward polar residues.

In terms of biological role, binds SECIS (Sec insertion sequence) elements present on selenocysteine (Sec) protein mRNAs, but does not promote Sec incorporation into selenoproteins in vitro. This is Selenocysteine insertion sequence-binding protein 2-like (SECISBP2L) from Homo sapiens (Human).